A 277-amino-acid polypeptide reads, in one-letter code: Small ribosomal subunit protein uS2 (277 aa).

Over residues 228-241 (YEERLQAETDKDAE) the composition is skewed to basic and acidic residues. The segment at 228–277 (YEERLQAETDKDAESSTVQQEENPEADIPESIETKESVSAAADSDLDENE) is disordered.

The protein belongs to the universal ribosomal protein uS2 family.

This is Small ribosomal subunit protein uS2 from Syntrophus aciditrophicus (strain SB).